The primary structure comprises 630 residues: Chaperone protein DnaK (630 aa).

T198 bears the Phosphothreonine; by autocatalysis mark. Positions 604–630 are disordered; the sequence is AAAAPGEEAPKDDDVVDAEFSEVDDKK. Positions 617 to 630 are enriched in acidic residues; that stretch reads DVVDAEFSEVDDKK.

The protein belongs to the heat shock protein 70 family.

Its function is as follows. Acts as a chaperone. The polypeptide is Chaperone protein DnaK (Rhizorhabdus wittichii (strain DSM 6014 / CCUG 31198 / JCM 15750 / NBRC 105917 / EY 4224 / RW1) (Sphingomonas wittichii)).